A 682-amino-acid chain; its full sequence is MHNTLDKSEAKERVTFLRNELHRHNHLYYIKDAPEISDAEYDRLFRELAELEALHPDLADPASPTARVGAPPTGDLATVTRTIPMLSISNAFADEELFKFDERVRRSLQTGDPVTYLAEPKLDGTAVELVYEKGRLVMAATRGDGVTGEVITPNARTIGSVPLHLTGDAVPMPNLLEVRGEVVMTKEGFEKLNALRLERDEPLFANARNAAAGSLRQLDSRVTASRPLTLIAYGIGRFSEIDAISTQHEIVTRLADFGFKTNSHVRWDLDIKGVIDFYRFLEGIRPSLPYDIDGMVVKVDRLDFQRTLGATSRSPRWVIAYKFAASQETTRLVAIDVQVGRTGALTPVALLEPVTIGGVTVSRATLHNEDEIARKDIRVGDAVLVQRAGDVIPEVVQVITGRRTGNETPFQMPATCPVCGTPVVREPSEAVTRCVNAACPAQVKERIKHFAAKGAFDIDGLGDKLVDQLVDRGMIASYADLFTLRVEDLESLDRMGFKSAQNLVAAIEKSRHITFDAFLYGLGMRHVGAHVATLLARAFPGIDQLAEAALAGQLNSIDGIGGVIAESVKNFFSNPENRQTVDSLINHGVALQFPEKEAATGHEMPLAGKTFVLTGTLEKMTRDQARQRIEAAGGKVTGSVSSRTDYVVAGEAPGSKRDKAEALGVAILDEAGLLSLLEPGER.

NAD(+) contacts are provided by residues 38–42, 87–88, and Glu-119; these read DAEYD and SI. The active-site N6-AMP-lysine intermediate is Lys-121. Residues Arg-142, Glu-181, Lys-298, and Lys-322 each contribute to the NAD(+) site. Cys-416, Cys-419, Cys-434, and Cys-439 together coordinate Zn(2+). The 82-residue stretch at 601–682 folds into the BRCT domain; it reads GHEMPLAGKT…LLSLLEPGER (82 aa).

The protein belongs to the NAD-dependent DNA ligase family. LigA subfamily. The cofactor is Mg(2+). Mn(2+) is required as a cofactor.

The catalysed reaction is NAD(+) + (deoxyribonucleotide)n-3'-hydroxyl + 5'-phospho-(deoxyribonucleotide)m = (deoxyribonucleotide)n+m + AMP + beta-nicotinamide D-nucleotide.. DNA ligase that catalyzes the formation of phosphodiester linkages between 5'-phosphoryl and 3'-hydroxyl groups in double-stranded DNA using NAD as a coenzyme and as the energy source for the reaction. It is essential for DNA replication and repair of damaged DNA. The chain is DNA ligase from Desulfosudis oleivorans (strain DSM 6200 / JCM 39069 / Hxd3) (Desulfococcus oleovorans).